The primary structure comprises 826 residues: Dolichyl-diphosphooligosaccharide--protein glycosyltransferase subunit STT3B (826 aa).

Positions 1–60 (MAEPSAPESKHKSSLNSSPWSGLMALGNSRHGHHGPGAQCAHKAAGGVAPPKPAPAGLSG) are disordered. Ala2 bears the N-acetylalanine mark. Residues 2 to 41 (AEPSAPESKHKSSLNSSPWSGLMALGNSRHGHHGPGAQCA) lie on the Cytoplasmic side of the membrane. 3 positions are modified to phosphoserine: Ser13, Ser18, and Ser29. Residues 42–86 (HKAAGGVAPPKPAPAGLSGGLSQPAGWQSLLSFTILFLAWLAGFS) traverse the membrane as a helical segment. Residues 87-173 (SRLFAVIRFE…VHIRDVCVFL (87 aa)) lie on the Lumenal side of the membrane. Residues 101-103 (EFD) carry the DXD motif 1 motif. Asp103 is a Mn(2+) binding site. The helical transmembrane segment at 174 to 192 (APTFSGLTSISTFLLTREL) threads the bilayer. The Cytoplasmic segment spans residues 193 to 194 (WN). Residues 195–212 (QGAGLLAACFIAIVPGYI) traverse the membrane as a helical segment. The Lumenal segment spans residues 213-223 (SRSVAGSFDNE). Residues Asp221 and Glu223 each coordinate Mn(2+). Positions 221-223 (DNE) match the DXD motif 2 motif. A helical transmembrane segment spans residues 224 to 243 (GIAIFALQFTYYLWVKSVKT). Over 244-245 (GS) the chain is Cytoplasmic. Residues 246-260 (VFWTMCCCLSYFYMV) traverse the membrane as a helical segment. Topologically, residues 261-265 (SAWGG) are lumenal. The chain crosses the membrane as a helical span at residues 266 to 282 (YVFIINLIPLHVFVLLL). Over 283–287 (MQRYS) the chain is Cytoplasmic. Residues 288–313 (KRVYIAYSTFYIVGLILSMQIPFVGF) traverse the membrane as a helical segment. The Lumenal segment spans residues 314-321 (QPIRTSEH). A helical transmembrane segment spans residues 322 to 341 (MAAAGVFALLQAYAFLQYLR). The Cytoplasmic segment spans residues 342-350 (DRLTKQEFQ). Residues 351 to 371 (TLFFLGVSLAAGAVFLSVIYL) traverse the membrane as a helical segment. Over 372–410 (TYTGYIAPWSGRFYSLWDTGYAKIHIPIIASVSEHQPTT) the chain is Lumenal. Residues 402-405 (SVSE) carry the SVSE motif motif. A helical transmembrane segment spans residues 411–433 (WVSFFFDLHILVCTFPAGLWFCI). Residues 434 to 439 (KNINDE) lie on the Cytoplasmic side of the membrane. Residues 440–456 (RVFVALYAISAVYFAGV) traverse the membrane as a helical segment. Over 457–460 (MVRL) the chain is Lumenal. Dolichyl diphosphooligosaccharide is bound at residue Arg459. A helical membrane pass occupies residues 461-482 (MLTLTPVVCMLSAIAFSNVFEH). Over 483–526 (YLGDDMKRENPPVEDSSDEDDKRNPGNLYDKAGKVRKHVTEQEK) the chain is Cytoplasmic. The segment at 490–512 (RENPPVEDSSDEDDKRNPGNLYD) is disordered. Ser498 and Ser499 each carry phosphoserine. Residues 527 to 552 (TEEGLGPNIKSIVTMLMLMLLMMFAV) form a helical membrane-spanning segment. Topologically, residues 553–826 (HCTWVTSNAY…KGKKISKKTV (274 aa)) are lumenal. An interacts with target acceptor peptide in protein substrate region spans residues 604–606 (WWD). A WWDYG motif motif is present at residues 604–608 (WWDYG). Tyr609 contributes to the dolichyl diphosphooligosaccharide binding site. Asn616 and Asn623 each carry an N-linked (GlcNAc...) asparagine glycan. Residue Asn627 is glycosylated (N-linked (GlcNAc...) (high mannose) asparagine). A glycan (N-linked (GlcNAc...) asparagine) is linked at Asn641. The DK motif motif lies at 671–678 (DINKFLWM).

This sequence belongs to the STT3 family. As to quaternary structure, component of the oligosaccharyltransferase (OST) complex. There are 2 OST complexes, OST-A and OST-B, which contain STT3A or STT3B as catalytic subunit, respectively. OST-A and OST-B contain common core subunits RPN1, RPN2, OST48, OST4, DAD1 and TMEM258, and OST-B contains either MAGT1 or TUSC3 as specific accessory subunit. Requires Mg(2+) as cofactor. The cofactor is Mn(2+).

Its subcellular location is the endoplasmic reticulum. It localises to the endoplasmic reticulum membrane. It catalyses the reaction a di-trans,poly-cis-dolichyl diphosphooligosaccharide + L-asparaginyl-[protein] = N(4)-(oligosaccharide-(1-&gt;4)-N-acetyl-beta-D-glucosaminyl-(1-&gt;4)-N-acetyl-beta-D-glucosaminyl)-L-asparaginyl-[protein] + a di-trans,poly-cis-dolichyl diphosphate + H(+). Its pathway is protein modification; protein glycosylation. In terms of biological role, catalytic subunit of the oligosaccharyl transferase (OST) complex that catalyzes the initial transfer of a defined glycan (Glc(3)Man(9)GlcNAc(2) in eukaryotes) from the lipid carrier dolichol-pyrophosphate to an asparagine residue within an Asn-X-Ser/Thr consensus motif in nascent polypeptide chains, the first step in protein N-glycosylation. N-glycosylation occurs cotranslationally and the complex associates with the Sec61 complex at the channel-forming translocon complex that mediates protein translocation across the endoplasmic reticulum (ER). All subunits are required for a maximal enzyme activity. This subunit contains the active site and the acceptor peptide and donor lipid-linked oligosaccharide (LLO) binding pockets. STT3B is present in a small subset of OST complexes and mediates both cotranslational and post-translational N-glycosylation of target proteins: STT3B-containing complexes are required for efficient post-translational glycosylation and while they are less competent than STT3A-containing complexes for cotranslational glycosylation, they have the ability to mediate glycosylation of some nascent sites that are not accessible for STT3A. STT3B-containing complexes also act post-translationally and mediate modification of skipped glycosylation sites in unfolded proteins. Plays a role in ER-associated degradation (ERAD) pathway that mediates ubiquitin-dependent degradation of misfolded endoplasmic reticulum proteins by mediating N-glycosylation of unfolded proteins, which are then recognized by the ERAD pathway and targeted for degradation. This Canis lupus familiaris (Dog) protein is Dolichyl-diphosphooligosaccharide--protein glycosyltransferase subunit STT3B.